The sequence spans 207 residues: Holliday junction branch migration complex subunit RuvA (207 aa).

A domain I region spans residues 1 to 64; that stretch reads MIGLISGQVQ…EDAQLLYGFI (64 aa). Residues 65–143 are domain II; it reads DRKERDVFRQ…NIEVDNSNLE (79 aa). The segment at 144–152 is flexible linker; sequence FAIQPAPIS. Positions 153–207 are domain III; sequence AEDSIIAEVEGALMSLGYKEKEAQQAIKAAKSNGETFADTQSLLKATLQQFQSFK.

The protein belongs to the RuvA family. Homotetramer. Forms an RuvA(8)-RuvB(12)-Holliday junction (HJ) complex. HJ DNA is sandwiched between 2 RuvA tetramers; dsDNA enters through RuvA and exits via RuvB. An RuvB hexamer assembles on each DNA strand where it exits the tetramer. Each RuvB hexamer is contacted by two RuvA subunits (via domain III) on 2 adjacent RuvB subunits; this complex drives branch migration. In the full resolvosome a probable DNA-RuvA(4)-RuvB(12)-RuvC(2) complex forms which resolves the HJ.

The protein resides in the cytoplasm. Functionally, the RuvA-RuvB-RuvC complex processes Holliday junction (HJ) DNA during genetic recombination and DNA repair, while the RuvA-RuvB complex plays an important role in the rescue of blocked DNA replication forks via replication fork reversal (RFR). RuvA specifically binds to HJ cruciform DNA, conferring on it an open structure. The RuvB hexamer acts as an ATP-dependent pump, pulling dsDNA into and through the RuvAB complex. HJ branch migration allows RuvC to scan DNA until it finds its consensus sequence, where it cleaves and resolves the cruciform DNA. The protein is Holliday junction branch migration complex subunit RuvA of Psychrobacter arcticus (strain DSM 17307 / VKM B-2377 / 273-4).